The sequence spans 1673 residues: Protein TIC 214 (1673 aa).

6 helical membrane-spanning segments follow: residues 18-38 (IINS…FSIG), 67-87 (FITG…HLAL), 90-110 (PHTI…CNTH), 127-147 (LSIQ…HFIL), 175-195 (VGWI…VVWI), and 218-238 (SMSI…YYLG).

The protein belongs to the TIC214 family. In terms of assembly, part of the Tic complex.

It localises to the plastid. The protein resides in the chloroplast inner membrane. Its function is as follows. Involved in protein precursor import into chloroplasts. May be part of an intermediate translocation complex acting as a protein-conducting channel at the inner envelope. In Lactuca sativa (Garden lettuce), this protein is Protein TIC 214.